The chain runs to 218 residues: UPF0301 protein RPB_4502 (218 aa).

Residues 1–26 form a disordered region; that stretch reads MVTKSKRPKSGDRSGREPGNAGPIEQ.

This sequence belongs to the UPF0301 (AlgH) family.

This Rhodopseudomonas palustris (strain HaA2) protein is UPF0301 protein RPB_4502.